The following is a 240-amino-acid chain: B-cell receptor-associated protein 29 (240 aa).

At M1 to T6 the chain is on the lumenal side. A helical membrane pass occupies residues A7 to I27. Residues P28 to K43 are Cytoplasmic-facing. A helical membrane pass occupies residues I44–L64. Residues D65–N103 are Lumenal-facing. A helical transmembrane segment spans residues L104–I124. The Cytoplasmic segment spans residues T125–L240. Residues G166–A233 are a coiled coil. Positions K237–L240 match the Di-lysine motif motif.

Belongs to the BCAP29/BCAP31 family. As to quaternary structure, homodimer and heterodimer with BCAP31. Binds CASP8 as a complex containing BCAP31, BCAP29, BCL2 and/or BCL2L1. Interacts with VAMP3, VAMP1 and membrane IgD immunoglobulins. May interact with ACTG1 and non-muscle myosin II.

Its subcellular location is the endoplasmic reticulum membrane. May play a role in anterograde transport of membrane proteins from the endoplasmic reticulum to the Golgi. May be involved in CASP8-mediated apoptosis. This chain is B-cell receptor-associated protein 29 (BCAP29), found in Bos taurus (Bovine).